Consider the following 150-residue polypeptide: Large ribosomal subunit protein uL15 (150 aa).

Positions 1 to 60 (MKLSDLRPNPGANKRRKRVGRGPGSGHGKTATRGHKGQKSRSGGLKDPRRFEGGRSTTLM) are disordered. The span at 30 to 39 (TATRGHKGQK) shows a compositional bias: basic residues. Basic and acidic residues predominate over residues 44 to 53 (GLKDPRRFEG).

Belongs to the universal ribosomal protein uL15 family. Part of the 50S ribosomal subunit.

In terms of biological role, binds to the 23S rRNA. The protein is Large ribosomal subunit protein uL15 of Thermus thermophilus (strain ATCC BAA-163 / DSM 7039 / HB27).